The following is a 1164-amino-acid chain: MKKNTDSEMDQRLGYKFLVPDPKAGVFYRPLHFQYVSYSNFILHRLHEILTVKRPLLSFKNNTERIMIEISNVKVTPPDYSPIIASIKGKSYDALATFTVNIFKEVMTKEGISITKISSYEGKDSHLIKIPLLIGYGNKNPLDTAKYLVPNVIGGVFINKQSVEKVGINLVEKITTWPKFRVVKPNSFTFSFSSVSPPNVLPTRYRHYKISLDISQLEALNISSTKTFITVNIVLLSQYLSRVSLEFIRRSLSYDMPPEVVYLVNAIIDSAKRITESITDFNIDTYINDLVEAEHIKQKSQLTINEFKYEMLHNFLPHMNYTPDQLKGFYMISLLRKFLYCIYHTSRYPDRDSMVCHRILTYGKYFETLAHDELENYIGNIRNDIMNNHKNRGTYAVNIHVLTTPGLNHAFSSLLSGKFKKSDGSYRTHPHYSWMQNISIPRSVGFYPDQVKISKMFSVRKYHPSQYLYFCSSDVPERGPQVGLVSQLSVLSSITNILTSEYLDLEKKICEYIRSYYKDDISYFETGFPITIENALVASLNPNMICDFVTDFRRRKRMGFFGNLEVGITLVRDHMNEIRINIGAGRLVRPFLVVDNGELMMDVCPELESRLDDMTFSDIQKEFPHVIEMVDIEQFTFSNVCESVQKFRMMSKDERKQYDLCDFPAEFRDGYVASSLVGINHNSGPRAILGCAQAKQAISCLSSDIRNKIDNGIHLMYPERPIVISKALETSKIAANCFGQHVTIALMSYKGINQEDGIIIKKQFIQRGGLDIVTAKKHQVEIPLENFNNKERDRSNAYSKLESNGLVRLNAFLESGDAMARNISSRTLEDDFARDNQISFDVSEKYTDMYKSRVERVQVELTDKVKVRVLTMKERRPILGDKFTTRTSQKGTVAYVADETELPYDENGITPDVIINSTSIFSRKTISMLIEVILTAAYSAKPYNNKGENRPVCFPSSNETSIDTYMQFAKQCYEHSNPKLSDEELSDKIFCEKILYDPETDKPYASKVFFGPIYYLRLRHLTQDKATVRCRGKKTKLIRQANEGRKRGGGIKFGEMERDCLIAHGAANTITEVLKDSEEDYQDVYVCENCGDIAAQIKGINTCLRCSKLNLSPLLTKIDTTHVSKVFLTQMNARGVKVKLDFERRPPSFYKPLDKVDLKPSFLV.

The protein belongs to the RNA polymerase beta chain family. As to quaternary structure, the DNA-dependent RNA polymerase used for intermediate and late genes expression consists of eight subunits 147 kDa, 133 kDa, 35 kDa, 30 kDa, 22 kDa, 19 kDa, 18 kDa and 7 kDa totalling more than 500 kDa in mass. The same holoenzyme, with the addition of the transcription-specificity factor RAP94, is used for early gene expression.

The protein localises to the virion. It carries out the reaction RNA(n) + a ribonucleoside 5'-triphosphate = RNA(n+1) + diphosphate. Functionally, part of the DNA-dependent RNA polymerase which catalyzes the transcription of viral DNA into RNA using the four ribonucleoside triphosphates as substrates. Responsible for the transcription of early, intermediate and late genes. DNA-dependent RNA polymerase associates with the early transcription factor (ETF), itself composed of OPG118 and OPG133, thereby allowing the early genes transcription. Late transcription, and probably also intermediate transcription, require newly synthesized RNA polymerase. This is DNA-directed RNA polymerase 133 kDa polypeptide (OPG151) from Homo sapiens (Human).